The chain runs to 123 residues: MALTKEDILNAIAEMPVMDLVELIEAAEEKFGVTATAAVAAAAPAAGGEAAAEQTEFDVVLTSFGGNKVAVIKAVRGATGLGLKEAKEVVEAAPKAIKEGVAKEEAEELKKTLEEAGAEVELK.

This sequence belongs to the bacterial ribosomal protein bL12 family. In terms of assembly, homodimer. Part of the ribosomal stalk of the 50S ribosomal subunit. Forms a multimeric L10(L12)X complex, where L10 forms an elongated spine to which 2 to 4 L12 dimers bind in a sequential fashion. Binds GTP-bound translation factors.

Functionally, forms part of the ribosomal stalk which helps the ribosome interact with GTP-bound translation factors. Is thus essential for accurate translation. The protein is Large ribosomal subunit protein bL12 of Pseudoalteromonas atlantica (strain T6c / ATCC BAA-1087).